We begin with the raw amino-acid sequence, 227 residues long: YEATS domain-containing protein 4 (227 aa).

In terms of domain architecture, YEATS spans 15–158 (RVKGVTIVKP…AMMQQLLTTS (144 aa)). Lys-37 participates in a covalent cross-link: Glycyl lysine isopeptide (Lys-Gly) (interchain with G-Cter in SUMO2). The interval 93 to 97 (WGEFE) is diacetylated histone H3 binding. Residues 163–227 (LGAYKHETEF…LEEDDQTKDI (65 aa)) are interaction with MLLT10. Residues 168–227 (HETEFAELEVKTREKLEAAKKKTSFEIAELKERLKASRETINCLKNEIRKLEEDDQTKDI) form an interaction with TACC1 region. The stretch at 178-226 (KTREKLEAAKKKTSFEIAELKERLKASRETINCLKNEIRKLEEDDQTKD) forms a coiled coil.

As to quaternary structure, component of numerous complexes with chromatin remodeling and histone acetyltransferase activity. Component of the NuA4 histone acetyltransferase complex which contains the catalytic subunit KAT5/TIP60 and the subunits EP400, TRRAP/PAF400, BRD8/SMAP, EPC1, DMAP1/DNMAP1, RUVBL1/TIP49, RUVBL2, ING3, actin, ACTL6A/BAF53A, MORF4L1/MRG15, MORF4L2/MRGX, MRGBP, YEATS4/GAS41, VPS72/YL1 and MEAF6. The NuA4 complex interacts with MYC and the adenovirus E1A protein. Component of a NuA4-related complex which contains EP400, TRRAP/PAF400, SRCAP, BRD8/SMAP, EPC1, DMAP1/DNMAP1, RUVBL1/TIP49, RUVBL2, actin, ACTL6A/BAF53A, VPS72 and YEATS4/GAS41. Interacts with MLLT10/AF10. Also interacts with the SWI/SNF component SMARCB1/BAF47, TACC1 and TACC2, and the nuclear matrix protein NUMA1.

It is found in the nucleus. In terms of biological role, chromatin reader component of the NuA4 histone acetyltransferase (HAT) complex, a complex involved in transcriptional activation of select genes principally by acetylation of nucleosomal histones H4 and H2A. Specifically recognizes and binds acylated histone H3, with a preference for histone H3 diacetylated at 'Lys-18' and 'Lys-27' (H3K18ac and H3K27ac) or histone H3 diacetylated at 'Lys-14' and 'Lys-27' (H3K14ac and H3K27ac). Also able to recognize and bind crotonylated histone H3. May also recognize and bind histone H3 succinylated at 'Lys-122' (H3K122succ); additional evidences are however required to confirm this result in vivo. Plays a key role in histone variant H2AZ1/H2A.Z deposition into specific chromatin regions: recognizes and binds H3K14ac and H3K27ac on the promoters of actively transcribed genes and recruits NuA4-related complex to deposit H2AZ1/H2A.Z. H2AZ1/H2A.Z deposition is required for maintenance of embryonic stem cell. The chain is YEATS domain-containing protein 4 from Mus musculus (Mouse).